The chain runs to 75 residues: Guanine nucleotide-binding protein G(I)/G(S)/G(O) subunit gamma-4 (75 aa).

At Cys72 the chain carries Cysteine methyl ester. Cys72 carries S-geranylgeranyl cysteine lipidation. The propeptide at 73–75 (TIL) is removed in mature form.

Belongs to the G protein gamma family. As to quaternary structure, g proteins are composed of 3 units, alpha, beta and gamma. Interacts with beta-1 and beta-2, but not with beta-3. Interacts with KCNK1. Interacts (via C-terminus) with KCNK2/TREK-1 (via N-terminus); this interaction confers ion selectivity to Cl(-) and L-glutamate. As to expression, brain.

The protein localises to the cell membrane. Guanine nucleotide-binding proteins (G proteins) are involved as a modulator or transducer in various transmembrane signaling systems. The beta and gamma chains are required for the GTPase activity, for replacement of GDP by GTP, and for G protein-effector interaction. This Mus musculus (Mouse) protein is Guanine nucleotide-binding protein G(I)/G(S)/G(O) subunit gamma-4 (Gng4).